Consider the following 379-residue polypeptide: MAKQDYYESLGVAKSADDREIKKAYKRLAMKYHPDRNPGDSEAEAKFKEIKEAYEILIDSQKRAAYDQYGHAAFEQGGMGGGGGGGFGGGGADFGDIFGDVFGDIFGGGRRQRASRGSDLRYNMELSLEEAVRGVTKEIRIPALEECDVCHGNGAKPGSSPITCPTCHGNGQVQMRQGFFTVQQACPHCHGRGKIIKDPCIKCHGHGRVEKSKTLSVKIPAGVDTGDRIRLSGEGEAGDHGAPSGDLYVQVQVKAHPIFQREENNLYCEVPINFAMAALGGEIEVPTLDGRVKLKVPAETQTGKLFRMRGKGVKSVRGGAQGDLLCRVVVETPVNLNERQRQLLQELDESFGGPSGERNSPRSKNFFDGVKKFFDDLTR.

The J domain maps to 5-70 (DYYESLGVAK…QKRAAYDQYG (66 aa)). The segment at 134–212 (GVTKEIRIPA…CHGHGRVEKS (79 aa)) adopts a CR-type zinc-finger fold. Zn(2+) contacts are provided by Cys147, Cys150, Cys164, Cys167, Cys186, Cys189, Cys200, and Cys203. CXXCXGXG motif repeat units lie at residues 147–154 (CDVCHGNG), 164–171 (CPTCHGNG), 186–193 (CPHCHGRG), and 200–207 (CIKCHGHG).

The protein belongs to the DnaJ family. In terms of assembly, homodimer. Zn(2+) serves as cofactor.

It localises to the cytoplasm. In terms of biological role, participates actively in the response to hyperosmotic and heat shock by preventing the aggregation of stress-denatured proteins and by disaggregating proteins, also in an autonomous, DnaK-independent fashion. Unfolded proteins bind initially to DnaJ; upon interaction with the DnaJ-bound protein, DnaK hydrolyzes its bound ATP, resulting in the formation of a stable complex. GrpE releases ADP from DnaK; ATP binding to DnaK triggers the release of the substrate protein, thus completing the reaction cycle. Several rounds of ATP-dependent interactions between DnaJ, DnaK and GrpE are required for fully efficient folding. Also involved, together with DnaK and GrpE, in the DNA replication of plasmids through activation of initiation proteins. This Pectobacterium atrosepticum (strain SCRI 1043 / ATCC BAA-672) (Erwinia carotovora subsp. atroseptica) protein is Chaperone protein DnaJ.